A 431-amino-acid chain; its full sequence is MRGLIPDHMLERGRTVLDSYREPVERLLSERRMPEEGWPDDVIATFLWELSRMDTDKDPKAARIGEREARVASRLAEESVFGFCHGVGRSGTLVDPQPKAPGASIMYALTNRLVTDFLRRLGFRIEGAFVVPGATGLSIALCLSALGEGEEVIYPYAAHKSPIKAVRLAGFGMRVVDTEIEGDRIVVDPGDVEEALERSESPAAVLSTLTFFPPRSSDPLPEIAELCEEYGVPHVVNAAYGIQHEQYRDLLNRAIKRGRVDVVVSSTDKNLLTPVGGGIVYAPDEETLREVSRAYPGRASAAPVAHALISLLSLGMKGYRRLMRRQKECKALLDELLEDLEARRDDVRVLDVDNPIASAVAVEGHDPVDLAARLYVRRVTGPRGVRADDPFGTSRLRGYHSNYITINAAIGVREEDVKTAVERLERELEGE.

The tract at residues 1–36 (MRGLIPDHMLERGRTVLDSYREPVERLLSERRMPEE) is tetramerization. Position 67 (R67) interacts with pyridoxal 5'-phosphate. The interval 88 to 98 (GRSGTLVDPQP) is phosphate loop (P-loop). The substrate site is built by R89, S90, and Q97. K269 carries the post-translational modification N6-(pyridoxal phosphate)lysine. R298 contacts substrate.

This sequence belongs to the SepSecS family. In terms of assembly, homotetramer. Requires pyridoxal 5'-phosphate as cofactor.

It catalyses the reaction O-phospho-L-seryl-tRNA(Sec) + selenophosphate + H2O = L-selenocysteinyl-tRNA(Sec) + 2 phosphate. It functions in the pathway aminoacyl-tRNA biosynthesis; selenocysteinyl-tRNA(Sec) biosynthesis; selenocysteinyl-tRNA(Sec) from L-seryl-tRNA(Sec) (archaeal/eukaryal route): step 2/2. Converts O-phosphoseryl-tRNA(Sec) to selenocysteinyl-tRNA(Sec) required for selenoprotein biosynthesis. The protein is O-phosphoseryl-tRNA(Sec) selenium transferase (spcS) of Methanopyrus kandleri (strain AV19 / DSM 6324 / JCM 9639 / NBRC 100938).